Reading from the N-terminus, the 74-residue chain is Protein SlyX homolog (74 aa).

Residues 52–74 (LKQMQENQSTDSDPADEPPPPHY) form a disordered region.

Belongs to the SlyX family.

The sequence is that of Protein SlyX homolog from Idiomarina loihiensis (strain ATCC BAA-735 / DSM 15497 / L2-TR).